We begin with the raw amino-acid sequence, 359 residues long: Nicotinate-nucleotide--dimethylbenzimidazole phosphoribosyltransferase (359 aa).

The active-site Proton acceptor is Glu-318.

This sequence belongs to the CobT family. As to quaternary structure, homodimer.

It carries out the reaction 5,6-dimethylbenzimidazole + nicotinate beta-D-ribonucleotide = alpha-ribazole 5'-phosphate + nicotinate + H(+). The protein operates within nucleoside biosynthesis; alpha-ribazole biosynthesis; alpha-ribazole from 5,6-dimethylbenzimidazole: step 1/2. Functionally, catalyzes the synthesis of alpha-ribazole-5'-phosphate from nicotinate mononucleotide (NAMN) and 5,6-dimethylbenzimidazole (DMB). The polypeptide is Nicotinate-nucleotide--dimethylbenzimidazole phosphoribosyltransferase (Escherichia coli O8 (strain IAI1)).